The chain runs to 434 residues: Chaperone SurA (434 aa).

The signal sequence occupies residues 1–20; sequence MKNWRTLILGLVICANTAFA. 2 consecutive PpiC domains span residues 171–272 and 282–382; these read DTEL…KVND and VTEV…QLVD.

It localises to the periplasm. The catalysed reaction is [protein]-peptidylproline (omega=180) = [protein]-peptidylproline (omega=0). Its function is as follows. Chaperone involved in the correct folding and assembly of outer membrane proteins. Recognizes specific patterns of aromatic residues and the orientation of their side chains, which are found more frequently in integral outer membrane proteins. May act in both early periplasmic and late outer membrane-associated steps of protein maturation. This is Chaperone SurA from Yersinia pestis bv. Antiqua (strain Antiqua).